The sequence spans 443 residues: Probable D-serine dehydratase (443 aa).

N6-(pyridoxal phosphate)lysine is present on Lys116.

This sequence belongs to the serine/threonine dehydratase family. DsdA subfamily. Pyridoxal 5'-phosphate serves as cofactor.

It catalyses the reaction D-serine = pyruvate + NH4(+). In Bacillus cereus (strain ATCC 14579 / DSM 31 / CCUG 7414 / JCM 2152 / NBRC 15305 / NCIMB 9373 / NCTC 2599 / NRRL B-3711), this protein is Probable D-serine dehydratase.